The primary structure comprises 206 residues: MHNDFNLLILSGPSGAGKSTLTKYLQEKIPKTHFSLSTTTRKPREGEVDGLHYNFVSEEEFKQGIEKGQFLEWAIVHNHYYGTSKIPVEKALKEGKIVIFDIDVQGHEILKKHYPNACSVFISTKNQEILKERLLLRGTDSKETIEKRLINAYKEMQCLESFDYLIINEDLEKSKEIILSIAKTLVHRLKAFNFEKICKAWKNETL.

In terms of domain architecture, Guanylate kinase-like spans 5–183 (FNLLILSGPS…SKEIILSIAK (179 aa)). 12 to 19 (GPSGAGKS) contributes to the ATP binding site.

It belongs to the guanylate kinase family.

It is found in the cytoplasm. It catalyses the reaction GMP + ATP = GDP + ADP. Its function is as follows. Essential for recycling GMP and indirectly, cGMP. In Helicobacter pylori (strain ATCC 700392 / 26695) (Campylobacter pylori), this protein is Guanylate kinase (gmk).